The sequence spans 72 residues: Large ribosomal subunit protein bL31 (72 aa).

It belongs to the bacterial ribosomal protein bL31 family. Type A subfamily. As to quaternary structure, part of the 50S ribosomal subunit.

In terms of biological role, binds the 23S rRNA. The polypeptide is Large ribosomal subunit protein bL31 (Deinococcus geothermalis (strain DSM 11300 / CIP 105573 / AG-3a)).